The following is a 107-amino-acid chain: RNA polymerase II transcriptional coactivator KIWI (107 aa).

Positions 1–40 are disordered; that stretch reads MSSRGKRKDEDVRASDDESETHAPAKKVAKPADDSDQSDD. Basic and acidic residues predominate over residues 7–23; that stretch reads RKDEDVRASDDESETHA.

It belongs to the transcriptional coactivator PC4 family.

The protein resides in the nucleus. Its function is as follows. General coactivator that functions cooperatively with TAFs and mediates functional interactions between upstream activators and the general transcriptional machinery. Binds single-stranded DNA. This is RNA polymerase II transcriptional coactivator KIWI (KIWI) from Arabidopsis thaliana (Mouse-ear cress).